The sequence spans 147 residues: Ribosomal RNA large subunit methyltransferase H (147 aa).

S-adenosyl-L-methionine is bound by residues leucine 64, glycine 95, and 114-119 (LSSLTL).

It belongs to the RNA methyltransferase RlmH family. As to quaternary structure, homodimer.

It localises to the cytoplasm. The catalysed reaction is pseudouridine(1915) in 23S rRNA + S-adenosyl-L-methionine = N(3)-methylpseudouridine(1915) in 23S rRNA + S-adenosyl-L-homocysteine + H(+). Specifically methylates the pseudouridine at position 1915 (m3Psi1915) in 23S rRNA. The sequence is that of Ribosomal RNA large subunit methyltransferase H from Polynucleobacter asymbioticus (strain DSM 18221 / CIP 109841 / QLW-P1DMWA-1) (Polynucleobacter necessarius subsp. asymbioticus).